The sequence spans 114 residues: Large ribosomal subunit protein bL19 (114 aa).

The protein belongs to the bacterial ribosomal protein bL19 family.

This protein is located at the 30S-50S ribosomal subunit interface and may play a role in the structure and function of the aminoacyl-tRNA binding site. The protein is Large ribosomal subunit protein bL19 of Clostridium botulinum (strain Loch Maree / Type A3).